The sequence spans 276 residues: E3 ubiquitin-protein ligase CCNB1IP1 (276 aa).

The segment at 10 to 52 (CNYRKCRIKLSGYAWVTACSHIFCDQHGSGEFSRSPAICPACN) adopts an RING-type; atypical zinc-finger fold. Residues 146–182 (MKKVLEEYKKKFSDISEKLMERNRQYQKLQGLYDSLR) adopt a coiled-coil conformation.

In terms of assembly, interacts with CCNB1, UBE2L3 and NF2. Ubiquitinated; autoubiquitinated. Post-translationally, phosphorylated by CDK1 on serine or threonine residues (in vitro). As to expression, expressed predominantly in the testes and 17 day embryos (corresponding to prophase I in females). Weakly or not expressed in other tissues.

It is found in the nucleus. The protein localises to the chromosome. The catalysed reaction is S-ubiquitinyl-[E2 ubiquitin-conjugating enzyme]-L-cysteine + [acceptor protein]-L-lysine = [E2 ubiquitin-conjugating enzyme]-L-cysteine + N(6)-ubiquitinyl-[acceptor protein]-L-lysine.. It participates in protein modification; protein ubiquitination. In terms of biological role, ubiquitin E3 ligase that acts as a limiting factor for crossing-over during meiosis: required during zygonema to limit the colocalization of RNF212 with MutS-gamma-associated recombination sites and thereby establish early differentiation of crossover and non-crossover sites. Later, it is directed by MutL-gamma to stably accumulate at designated crossover sites. Probably promotes the dissociation of RNF212 and MutS-gamma to allow the progression of recombination and the implementation of the final steps of crossing over. Modulates cyclin-B levels and participates in the regulation of cell cycle progression through the G2 phase. Overexpression causes delayed entry into mitosis. The sequence is that of E3 ubiquitin-protein ligase CCNB1IP1 (Ccnb1ip1) from Mus musculus (Mouse).